Reading from the N-terminus, the 385-residue chain is UPF0284 protein PMM0439 (385 aa).

The protein belongs to the UPF0284 family.

In Prochlorococcus marinus subsp. pastoris (strain CCMP1986 / NIES-2087 / MED4), this protein is UPF0284 protein PMM0439.